The following is a 41-amino-acid chain: trp operon leader peptide (41 aa).

Its function is as follows. This protein is involved in control of the biosynthesis of tryptophan. This chain is trp operon leader peptide (trpL), found in Vibrio parahaemolyticus serotype O3:K6 (strain RIMD 2210633).